A 29-amino-acid chain; its full sequence is Cycloviolacin-H2 (29 aa).

A cross-link (cyclopeptide (Ser-Asn)) is located at residues 1–29 (SAIACGESCVYIPCFIPGCSCRNRVCYLN). Cystine bridges form between C5-C19, C9-C21, and C14-C26.

This is a cyclic peptide.

Its function is as follows. Probably participates in a plant defense mechanism. In Viola hederacea (Australian violet), this protein is Cycloviolacin-H2.